The chain runs to 472 residues: Siroheme synthase 1 (472 aa).

The precorrin-2 dehydrogenase /sirohydrochlorin ferrochelatase stretch occupies residues 1 to 203; sequence MDYLPLFADL…GQLAQAEEEL (203 aa). Residues 22-23 and 43-44 each bind NAD(+); these read EV and QT. Serine 128 carries the post-translational modification Phosphoserine. The uroporphyrinogen-III C-methyltransferase stretch occupies residues 215-472; the sequence is GEVALVGAGP…AISPSVVNLA (258 aa). Proline 224 serves as a coordination point for S-adenosyl-L-methionine. Aspartate 247 functions as the Proton acceptor in the catalytic mechanism. Lysine 269 functions as the Proton donor in the catalytic mechanism. S-adenosyl-L-methionine is bound by residues 300–302, isoleucine 305, 330–331, methionine 382, and glycine 411; these read GGD and TA.

The protein in the N-terminal section; belongs to the precorrin-2 dehydrogenase / sirohydrochlorin ferrochelatase family. It in the C-terminal section; belongs to the precorrin methyltransferase family.

The enzyme catalyses uroporphyrinogen III + 2 S-adenosyl-L-methionine = precorrin-2 + 2 S-adenosyl-L-homocysteine + H(+). The catalysed reaction is precorrin-2 + NAD(+) = sirohydrochlorin + NADH + 2 H(+). It catalyses the reaction siroheme + 2 H(+) = sirohydrochlorin + Fe(2+). The protein operates within cofactor biosynthesis; adenosylcobalamin biosynthesis; precorrin-2 from uroporphyrinogen III: step 1/1. It participates in cofactor biosynthesis; adenosylcobalamin biosynthesis; sirohydrochlorin from precorrin-2: step 1/1. It functions in the pathway porphyrin-containing compound metabolism; siroheme biosynthesis; precorrin-2 from uroporphyrinogen III: step 1/1. Its pathway is porphyrin-containing compound metabolism; siroheme biosynthesis; siroheme from sirohydrochlorin: step 1/1. The protein operates within porphyrin-containing compound metabolism; siroheme biosynthesis; sirohydrochlorin from precorrin-2: step 1/1. In terms of biological role, multifunctional enzyme that catalyzes the SAM-dependent methylations of uroporphyrinogen III at position C-2 and C-7 to form precorrin-2 via precorrin-1. Then it catalyzes the NAD-dependent ring dehydrogenation of precorrin-2 to yield sirohydrochlorin. Finally, it catalyzes the ferrochelation of sirohydrochlorin to yield siroheme. The sequence is that of Siroheme synthase 1 from Yersinia enterocolitica serotype O:8 / biotype 1B (strain NCTC 13174 / 8081).